Here is a 192-residue protein sequence, read N- to C-terminus: Imidazole glycerol phosphate synthase subunit HisH (192 aa).

The region spanning 1–192 is the Glutamine amidotransferase type-1 domain; it reads MIVIVDYGLG…QAIQGGFIND (192 aa). Catalysis depends on Cys-77, which acts as the Nucleophile. Active-site residues include His-169 and Glu-171.

Heterodimer of HisH and HisF.

Its subcellular location is the cytoplasm. The catalysed reaction is 5-[(5-phospho-1-deoxy-D-ribulos-1-ylimino)methylamino]-1-(5-phospho-beta-D-ribosyl)imidazole-4-carboxamide + L-glutamine = D-erythro-1-(imidazol-4-yl)glycerol 3-phosphate + 5-amino-1-(5-phospho-beta-D-ribosyl)imidazole-4-carboxamide + L-glutamate + H(+). The enzyme catalyses L-glutamine + H2O = L-glutamate + NH4(+). Its pathway is amino-acid biosynthesis; L-histidine biosynthesis; L-histidine from 5-phospho-alpha-D-ribose 1-diphosphate: step 5/9. IGPS catalyzes the conversion of PRFAR and glutamine to IGP, AICAR and glutamate. The HisH subunit catalyzes the hydrolysis of glutamine to glutamate and ammonia as part of the synthesis of IGP and AICAR. The resulting ammonia molecule is channeled to the active site of HisF. In Staphylococcus aureus (strain bovine RF122 / ET3-1), this protein is Imidazole glycerol phosphate synthase subunit HisH.